A 154-amino-acid chain; its full sequence is Large ribosomal subunit protein uL24 (154 aa).

A disordered region spans residues 97 to 154; it reads EIAARKNLPPPEVPEETSNDTKESDENVTGADKEETNEIKEEDLNDNEDKNNDGSQEA. A compositionally biased stretch (basic and acidic residues) spans 115–135; it reads NDTKESDENVTGADKEETNEI.

Belongs to the universal ribosomal protein uL24 family. In terms of assembly, part of the 50S ribosomal subunit.

Functionally, one of two assembly initiator proteins, it binds directly to the 5'-end of the 23S rRNA, where it nucleates assembly of the 50S subunit. In terms of biological role, located at the polypeptide exit tunnel on the outside of the subunit. The polypeptide is Large ribosomal subunit protein uL24 (Picrophilus torridus (strain ATCC 700027 / DSM 9790 / JCM 10055 / NBRC 100828 / KAW 2/3)).